The primary structure comprises 90 residues: Small ribosomal subunit protein uS17 (90 aa).

Belongs to the universal ribosomal protein uS17 family. Part of the 30S ribosomal subunit.

In terms of biological role, one of the primary rRNA binding proteins, it binds specifically to the 5'-end of 16S ribosomal RNA. This Cutibacterium acnes (strain DSM 16379 / KPA171202) (Propionibacterium acnes) protein is Small ribosomal subunit protein uS17.